Here is a 417-residue protein sequence, read N- to C-terminus: Gamma-glutamyl phosphate reductase (417 aa).

This sequence belongs to the gamma-glutamyl phosphate reductase family.

It is found in the cytoplasm. The catalysed reaction is L-glutamate 5-semialdehyde + phosphate + NADP(+) = L-glutamyl 5-phosphate + NADPH + H(+). Its pathway is amino-acid biosynthesis; L-proline biosynthesis; L-glutamate 5-semialdehyde from L-glutamate: step 2/2. In terms of biological role, catalyzes the NADPH-dependent reduction of L-glutamate 5-phosphate into L-glutamate 5-semialdehyde and phosphate. The product spontaneously undergoes cyclization to form 1-pyrroline-5-carboxylate. This chain is Gamma-glutamyl phosphate reductase, found in Legionella pneumophila (strain Paris).